The sequence spans 2661 residues: MDPLASNFRGETVLLFGSQSLSFDANTFNAIRSSLEKEEYLRWIRHTVADLPSALNTALQHVPHLKGSEEWAFSAVQELNDWLDSGHQPNSLDPSALPNTILTPLVVILHLSQYMKYLISANDYQDDTLLSKRQQETCETLGLCTGLLSSLAVSSSRTRLQLERYGSVAIRLAMLIGLIVDARDRSTSHGPSQSTAALWHSEEQKEKLLEILAANPEAYISVYYDQNRATITIPTAQTATIRKDLASAGLTTTEIGLRGRFHWSGHEAEVDQLIKLCDIDKRFQFTQKTALVLPNRSFDSEPHVHQGPLHAMALWSILVNPPEWQKTVSAVYASTLVSTTAKVVSFGQERCVPPTILQNLDSRVFYMGDLEKTSSPRPRGDDIAIVGASIKVAGADDLEEFWEILSKGISQHKEVPPERFTFDTVYRDRDPKTKWYGNFLNDPDKFDHKFFKKSPREAESMDPQQRLLLQIAYQALEKGGYFHNAGPDQRIGCYMGVCAVDYENNLACYAPNAFTATSHLRGFIAGKVSHYFGWTGPALTIDTACSSSAVAVHLACQAILKGECTAALAGGTQILTSPLWFQNLAGASFLSKTGQCKPFDSKADGYCRGEAVGAVFLKKMSAALADGDQILGVISGTAVQQNENCTPIVVPNKPSLSDMFQSVIEKARLQPDHITVVEAHGTGTAVGDPVEYASVRDTLGGSKRTKKLFLGSAKGLVGHCESASGIISLVKVLLMIQKGMIPPQASFNTLNPATKATPADGIEISRQLTEWNAPFRAALINNYGASGSNASMVITQAPRATTTIPGGNEMERVPFWFSALNEKSLQAYAAEFLKYLKANHGQLSLPDLGFNVSRQSNRSLPRRLLFTCQSTNELQQRLEEYVKGDSKTSSSECPATRPLVLCFGGQVSTFIGLSRQVYEDVALLRGHLNSCNRRCLALGLRGIFPAIFQKGPIEDIVTLQLSLFAMQYSCAKSWIDAGAQPVAVLGHSFGELTALCVSGVLSLDDALRMIAARAQIIRDSWGSDGGSMMALEADLDVVQKLLATSNANLPENEVAVIACYNGPRSFTIAGPRRAIDALDTSRQASPEFASIKAKRLDVTNAFHSTLVEPLRNKLTEATKELNFRERGTIHLERSTETRSEKLIDNPGSYVADHMRNPVFFHHALQRLDNQFPNAIYLEAGSSSTITNMASRALGGSGGRHFQAMSITTDKGLDNLIDATMSLWNAGLNVRFWKQAFVETENYKPLLLPPYQFEKSRHWLELKEPPKPEIITMSAGGQRTDKAPDTILSFVGYQDSNKSHARFRLNTENREYQELMKAHLIVYTAPICPATVQMDIAIEGLKTLVPGIGSEVQPQIHNVDNQTPICADKSQSIWLDMKLADEPSKISWRFRFFGTSLDNDKMPSNKQADAGVTFTLGTLVVVPMEDEQTKLDLTRYDLLTGHKRCVELLHSTEAEEILQGRTIYKTFADIVDYGEQYRGLQRLIGHGNNSVGRVVRAYNPKTWFDAHLSDAYAQVVGIWLNCMTEHDAEELYVARGFEKWIRSPDIQPTSRPDSYDVLAYHKGPSRNSCLSDIFVFHPKTGQLIEAILGFQFVRIPRKGLAKLLTRLTRDETALATNAQSRAIPPPSTNTTQSSSQQTPIPKAAAPKKEKKRPGNPKLDVLPKLITILADLVGLEPEEITINSELADIGVDSLMAMEVVTEIERVFSCSVPLDDVADVTTMSQLVRVVESIVGMEGSETSNLSSDDDDENGTPSTPETDLSDASVDAVVDNAELIAYFAESLGMDASEISANVQLKELGVDSLLSMELGGELVEKFGLNLNESTVLEDMTINDLRQTAPGAAAPKVAESTITSAPQVTTSKAVPLTNGTSFNIPVETILSAFKETKAAGDSFITATGCRGYVEQVLPEQTLLCALHTLEAFEKMGSSIRTLKAGDTMTLFTPRPEYVSLIERLTEMLETQIGLIKVIGGPGLTIERTQTPYPTASSTVLMQEMRQKYPQYQNVNELIFYVGSNLDRALRGETDGIKLIFGCAQGRELVSGLYGDWIMNICYYRQMEDFLIRLIAKLPSNEPLRILEMGAGTGGTSKWLLPLLARLGCPVEYTFTDLAPSLVAGARKTFKQYASFMKFRAHDIEQEPAEDLLGTQHMVVASNAVHATVSLVESAKKLRKVLRPNGILMMLEMIEPLYWIDMIFGLFEGWWLFADGRKHALTPPARWKTDLQAAGFGRVDWSDGNLPENSINKVIIAVACEPEKPEELDRKSVVDEFVHKYTQGVDLLSPAIRVNRKSLGHAVLVTGGTGSVGAHVVAHLAQQPFVTKVICLNRRGKLDARQRQLESLAQKGLQLSDESLAKIQVYETDLSKPQLGLSPEMYLSLLESTTDIIHNAWPMSIKRQVQGFEAQFRIMRNLIEFARDISLGGGDPLGFQFISSIATVGHYPLWKQEIRVPEDRLPLDAVLPIGYGDAKYICELMLDKTLHTYPHRFRVSTVRLGQVGGSKISGYWNPVEHLSFLFKSAQTIQQLPDLHGPLSWTPVDDVAKSLVDLLFTEKPYPVYHIENPITQPWQEMIPILADALGIPRGNRLSLKDWVARVREFPEDPTDKDKNPATALVDFFEQDFERMSVGGLLLDTTKSREHSPSLRAVGPITPDLVRKFISYWRSISFVA.

Residues 14–271 (LLFGSQSLSF…HWSGHEAEVD (258 aa)) are N-terminal acylcarrier protein transacylase domain (SAT). The Ketosynthase family 3 (KS3) domain occupies 380–796 (GDDIAIVGAS…GSNASMVITQ (417 aa)). Active-site for beta-ketoacyl synthase activity residues include cysteine 545, histidine 680, and histidine 719. The segment at 901–1211 (LCFGGQVSTF…QAMSITTDKG (311 aa)) is malonyl-CoA:ACP transacylase (MAT) domain. Serine 988 serves as the catalytic For acyl/malonyl transferase activity. Residues 1283-1425 (PDTILSFVGY…GTLVVVPMED (143 aa)) are N-terminal hotdog fold. A PKS/mFAS DH domain is found at 1283-1600 (PDTILSFVGY…FVRIPRKGLA (318 aa)). A product template (PT) domain region spans residues 1288–1599 (SFVGYQDSNK…QFVRIPRKGL (312 aa)). The active-site Proton acceptor; for dehydratase activity is histidine 1318. The interval 1453-1600 (AEEILQGRTI…FVRIPRKGLA (148 aa)) is C-terminal hotdog fold. Aspartate 1509 (proton donor; for dehydratase activity) is an active-site residue. The disordered stretch occupies residues 1614–1656 (ATNAQSRAIPPPSTNTTQSSSQQTPIPKAAAPKKEKKRPGNPK). The segment covering 1627-1643 (TNTTQSSSQQTPIPKAA) has biased composition (low complexity). A Carrier 1 domain is found at 1654 to 1731 (NPKLDVLPKL…QLVRVVESIV (78 aa)). Serine 1691 is subject to O-(pantetheine 4'-phosphoryl)serine. The segment at 1734 to 1762 (EGSETSNLSSDDDDENGTPSTPETDLSDA) is disordered. Residues 1764–1841 (VDAVVDNAEL…DLRQTAPGAA (78 aa)) form the Carrier 2 domain. At serine 1801 the chain carries O-(pantetheine 4'-phosphoryl)serine. A methyltransferase (CMeT) domain region spans residues 1998 to 2231 (QYQNVNELIF…GFGRVDWSDG (234 aa)). Positions 2271–2659 (GVDLLSPAIR…FISYWRSISF (389 aa)) are thioesterase (TE) domain.

The protein operates within secondary metabolite biosynthesis. Its function is as follows. Non-reducing polyketide synthase; part of the gene cluster that mediates the biosynthesis of the tropolone class of fungal maleic anhydrides. The pathway begins with the synthesis of 3-methylorcinaldehyde by the non-reducing polyketide synthase (PKS) tropA. 3-methylorcinaldehyde is the substrate for the FAD-dependent monooxygenase tropB to yield a dearomatized hydroxycyclohexadione. The 2-oxoglutarate-dependent dioxygenase tropC then performs the oxidative ring expansion to provide the first tropolone metabolite stipitaldehyde. Trop D converts stipitaldehyde into stipitacetal which is in turn converted to stipitalide by the short-chain dehydrogenase/reductase tropE. The next steps involve tropF, tropG, tropH, tropI and tropJ to form successive tropolone maleic anhydrides including stipitaldehydic, stipitatonic and stipitatic acids. This is 3-methylorcinaldehyde synthase tropA from Talaromyces stipitatus (strain ATCC 10500 / CBS 375.48 / QM 6759 / NRRL 1006) (Penicillium stipitatum).